Reading from the N-terminus, the 85-residue chain is COMM domain-containing protein 6 (85 aa).

Methionine 1 is modified (N-acetylmethionine). Residues 18-85 (QLVDFQWKLG…KEIAAVIETV (68 aa)) enclose the COMM domain.

Belongs to the COMM domain-containing protein 6 family. As to quaternary structure, component of the commander complex consisting of the CCC subcomplex and the retriever subcomplex. Component of the CCC (COMMD/CCDC22/CCDC93) subcomplex consisting of COMMD1, COMMD2, COMMD3, COMMD4, COMMD5, COMMD6, COMMD7, COMMD8, COMMD9, COMMD10, CCDC22 and CCDC93; within the complex forms a heterodimer with COMMD1. May form a homodimer with isoform 1. Interacts with RELA, RELB, NFKB1/p105. Does not interact with NFKBIB. Interacts with CCDC22, CCDC93, SCNN1B, CUL4A. As to expression, ubiquitous. Expressed in brain, heart, skeletal muscle, lung, pancreas, liver, kidney, small intestine and placenta.

It is found in the nucleus. It localises to the cytoplasm. Functionally, scaffold protein in the commander complex that is essential for endosomal recycling of transmembrane cargos; the commander complex is composed of the CCC subcomplex and the retriever subcomplex. May modulate activity of cullin-RING E3 ubiquitin ligase (CRL) complexes. Down-regulates activation of NF-kappa-B. Inhibits TNF-induced NFKB1 activation. The protein is COMM domain-containing protein 6 (COMMD6) of Homo sapiens (Human).